A 274-amino-acid polypeptide reads, in one-letter code: Ribosomal RNA small subunit methyltransferase A (274 aa).

S-adenosyl-L-methionine is bound by residues histidine 15, leucine 17, glycine 42, glutamate 64, aspartate 89, and asparagine 108.

The protein belongs to the class I-like SAM-binding methyltransferase superfamily. rRNA adenine N(6)-methyltransferase family. RsmA subfamily.

Its subcellular location is the cytoplasm. It carries out the reaction adenosine(1518)/adenosine(1519) in 16S rRNA + 4 S-adenosyl-L-methionine = N(6)-dimethyladenosine(1518)/N(6)-dimethyladenosine(1519) in 16S rRNA + 4 S-adenosyl-L-homocysteine + 4 H(+). Functionally, specifically dimethylates two adjacent adenosines (A1518 and A1519) in the loop of a conserved hairpin near the 3'-end of 16S rRNA in the 30S particle. May play a critical role in biogenesis of 30S subunits. The sequence is that of Ribosomal RNA small subunit methyltransferase A from Prochlorococcus marinus (strain MIT 9215).